A 156-amino-acid chain; its full sequence is 6,7-dimethyl-8-ribityllumazine synthase (156 aa).

Residues phenylalanine 25, 59 to 61, and 83 to 85 each bind 5-amino-6-(D-ribitylamino)uracil; these read AWE and AVI. 88–89 is a binding site for (2S)-2-hydroxy-3-oxobutyl phosphate; that stretch reads ST. The active-site Proton donor is the histidine 91. Asparagine 116 serves as a coordination point for 5-amino-6-(D-ribitylamino)uracil. Residue arginine 130 participates in (2S)-2-hydroxy-3-oxobutyl phosphate binding.

Belongs to the DMRL synthase family. Forms an icosahedral capsid composed of 60 subunits, arranged as a dodecamer of pentamers.

It catalyses the reaction (2S)-2-hydroxy-3-oxobutyl phosphate + 5-amino-6-(D-ribitylamino)uracil = 6,7-dimethyl-8-(1-D-ribityl)lumazine + phosphate + 2 H2O + H(+). The protein operates within cofactor biosynthesis; riboflavin biosynthesis; riboflavin from 2-hydroxy-3-oxobutyl phosphate and 5-amino-6-(D-ribitylamino)uracil: step 1/2. Its function is as follows. Catalyzes the formation of 6,7-dimethyl-8-ribityllumazine by condensation of 5-amino-6-(D-ribitylamino)uracil with 3,4-dihydroxy-2-butanone 4-phosphate. This is the penultimate step in the biosynthesis of riboflavin. The protein is 6,7-dimethyl-8-ribityllumazine synthase of Acinetobacter baylyi (strain ATCC 33305 / BD413 / ADP1).